The chain runs to 224 residues: 4'-phosphopantetheinyl transferase ffp (224 aa).

3 residues coordinate Mg(2+): D107, E109, and E151. Residues 158-189 (GKGLSLPLDSFSVRLHEDGRVSVELPEHHTPC) are peptidyl carrier protein binding.

Belongs to the P-Pant transferase superfamily. Gsp/Sfp/HetI/AcpT family. Requires Mg(2+) as cofactor.

The enzyme catalyses apo-[peptidyl-carrier protein] + CoA = holo-[peptidyl-carrier protein] + adenosine 3',5'-bisphosphate + H(+). In terms of biological role, may activate the peptidyl carrier protein (PCP) domains of fengycin synthase by transferring the 4'-phosphopantetheinyl moiety of coenzyme A (CoA) to a serine residue. In Bacillus subtilis, this protein is 4'-phosphopantetheinyl transferase ffp (ffp).